The primary structure comprises 355 residues: Nicotinate-nucleotide--dimethylbenzimidazole phosphoribosyltransferase (355 aa).

Residue Glu-321 is the Proton acceptor of the active site.

This sequence belongs to the CobT family.

The catalysed reaction is 5,6-dimethylbenzimidazole + nicotinate beta-D-ribonucleotide = alpha-ribazole 5'-phosphate + nicotinate + H(+). It participates in nucleoside biosynthesis; alpha-ribazole biosynthesis; alpha-ribazole from 5,6-dimethylbenzimidazole: step 1/2. Catalyzes the synthesis of alpha-ribazole-5'-phosphate from nicotinate mononucleotide (NAMN) and 5,6-dimethylbenzimidazole (DMB). The sequence is that of Nicotinate-nucleotide--dimethylbenzimidazole phosphoribosyltransferase from Desulfotalea psychrophila (strain LSv54 / DSM 12343).